The following is a 237-amino-acid chain: Concanavalin-A (237 aa).

Mn(2+)-binding residues include glutamate 8 and aspartate 10. Positions 10, 12, 14, and 19 each coordinate Ca(2+). Asparagine 14 contacts a carbohydrate. Positions 19 and 24 each coordinate Mn(2+). A carbohydrate-binding positions include 98–100 (GLY), aspartate 208, and arginine 228.

It belongs to the leguminous lectin family. In terms of assembly, homotetramer. Concanavalin A-like lectins of the Diocleinae subtribe undergo proteolytic processing referred to as circular permutation. The propeptide is split into an N-terminal and a C-terminal part, the gamma and beta chain, respectively. These are then religated in beta-gamma order to form the mature alpha chain. The beta and gamma chains can often be detected in cell extracts. Residues 1-118 of the mature chain, as displayed here, probably constitute the beta chain in the propeptide, residues 119-237 the gamma chain.

Its function is as follows. Glucose/D-mannose specific lectin. In Canavalia cathartica (Jackbean), this protein is Concanavalin-A.